The sequence spans 396 residues: 1-deoxy-D-xylulose 5-phosphate reductoisomerase (396 aa).

Residues threonine 15, glycine 16, serine 17, isoleucine 18, glycine 41, and asparagine 130 each contribute to the NADPH site. Residue lysine 131 coordinates 1-deoxy-D-xylulose 5-phosphate. Glutamate 132 contacts NADPH. Aspartate 155 is a binding site for Mn(2+). 4 residues coordinate 1-deoxy-D-xylulose 5-phosphate: serine 156, glutamate 157, serine 181, and histidine 204. Residue glutamate 157 coordinates Mn(2+). NADPH is bound at residue glycine 210. Serine 217, asparagine 222, lysine 223, and glutamate 226 together coordinate 1-deoxy-D-xylulose 5-phosphate. Residue glutamate 226 coordinates Mn(2+).

This sequence belongs to the DXR family. Requires Mg(2+) as cofactor. The cofactor is Mn(2+).

It carries out the reaction 2-C-methyl-D-erythritol 4-phosphate + NADP(+) = 1-deoxy-D-xylulose 5-phosphate + NADPH + H(+). It participates in isoprenoid biosynthesis; isopentenyl diphosphate biosynthesis via DXP pathway; isopentenyl diphosphate from 1-deoxy-D-xylulose 5-phosphate: step 1/6. In terms of biological role, catalyzes the NADPH-dependent rearrangement and reduction of 1-deoxy-D-xylulose-5-phosphate (DXP) to 2-C-methyl-D-erythritol 4-phosphate (MEP). This chain is 1-deoxy-D-xylulose 5-phosphate reductoisomerase, found in Bifidobacterium longum (strain NCC 2705).